The chain runs to 834 residues: Protein translocase subunit SecA (834 aa).

ATP-binding positions include Q85, 103-107 (GEGKT), and D491. C818, C820, C829, and C830 together coordinate Zn(2+).

This sequence belongs to the SecA family. Monomer and homodimer. Part of the essential Sec protein translocation apparatus which comprises SecA, SecYEG and auxiliary proteins SecDF. Other proteins may also be involved. Requires Zn(2+) as cofactor.

It is found in the cell membrane. The protein localises to the cytoplasm. The enzyme catalyses ATP + H2O + cellular proteinSide 1 = ADP + phosphate + cellular proteinSide 2.. Its function is as follows. Part of the Sec protein translocase complex. Interacts with the SecYEG preprotein conducting channel. Has a central role in coupling the hydrolysis of ATP to the transfer of proteins into and across the cell membrane, serving as an ATP-driven molecular motor driving the stepwise translocation of polypeptide chains across the membrane. In Clostridium kluyveri (strain ATCC 8527 / DSM 555 / NBRC 12016 / NCIMB 10680 / K1), this protein is Protein translocase subunit SecA.